A 301-amino-acid polypeptide reads, in one-letter code: MHMSNARPSKSRTKFLLAFLCFTLMASLFGATALFGPSKAAAASPDDNFSPETLQFLRNNTGLDGEQWNNIMKLINKPEQDDLNWIKYYGYCEDIEDERGYTIGLFGATTGGSRDTHPDGPDLFKAYDAAKGASNPSADGALKRLGINGKMKGSILEIKDSEKVFCGKIKKLQNDAAWRKAMWETFYNVYIRYSVEQARQRGFTSAVTIGSFVDTALNQGATGGSDTLQGLLARSGSSSNEKTFMKNFHAKRTLVVDTNKYNKPPNGKNRVKQWDTLVDMGKMNLKNVDSEIAQVTDWEMK.

The first 42 residues, 1–42, serve as a signal peptide directing secretion; that stretch reads MHMSNARPSKSRTKFLLAFLCFTLMASLFGATALFGPSKAAA. The Proton donor role is filled by E79. C92 and C166 are oxidised to a cystine. Catalysis depends on D97, which acts as the Nucleophile.

It belongs to the glycosyl hydrolase 46 family.

It is found in the secreted. The catalysed reaction is Endohydrolysis of beta-(1-&gt;4)-linkages between D-glucosamine residues in a partly acetylated chitosan.. Functionally, aids in the defense against invading fungal pathogens by degrading their cell wall chitosan. The protein is Chitosanase (csn) of Niallia circulans (Bacillus circulans).